The primary structure comprises 120 residues: Movement protein TGB2 (120 aa).

At M1 to D8 the chain is on the cytoplasmic side. The chain crosses the membrane as a helical span at residues Y9–L29. At T30 to L71 the chain is on the lumenal side. Residues I72–V92 traverse the membrane as a helical segment. Over S93–E120 the chain is Cytoplasmic.

The protein belongs to the Tymovirales TGBp2 protein family.

The protein localises to the host endoplasmic reticulum membrane. Functionally, plays a role in viral cell-to-cell propagation, by facilitating genome transport to neighboring plant cells through plasmosdesmata,. This chain is Movement protein TGB2, found in Crataegus (hawthorn).